The sequence spans 596 residues: Elongation factor 4 (596 aa).

Residues lysine 2–glutamate 184 form the tr-type G domain. GTP contacts are provided by residues aspartate 14–threonine 19 and asparagine 131–aspartate 134.

It belongs to the TRAFAC class translation factor GTPase superfamily. Classic translation factor GTPase family. LepA subfamily.

It is found in the cell inner membrane. The catalysed reaction is GTP + H2O = GDP + phosphate + H(+). Its function is as follows. Required for accurate and efficient protein synthesis under certain stress conditions. May act as a fidelity factor of the translation reaction, by catalyzing a one-codon backward translocation of tRNAs on improperly translocated ribosomes. Back-translocation proceeds from a post-translocation (POST) complex to a pre-translocation (PRE) complex, thus giving elongation factor G a second chance to translocate the tRNAs correctly. Binds to ribosomes in a GTP-dependent manner. This is Elongation factor 4 from Shewanella halifaxensis (strain HAW-EB4).